The sequence spans 250 residues: 5'-nucleotidase SurE (250 aa).

Positions 9, 10, 40, and 92 each coordinate a divalent metal cation.

It belongs to the SurE nucleotidase family. It depends on a divalent metal cation as a cofactor.

The protein resides in the cytoplasm. It carries out the reaction a ribonucleoside 5'-phosphate + H2O = a ribonucleoside + phosphate. Nucleotidase that shows phosphatase activity on nucleoside 5'-monophosphates. This Shewanella pealeana (strain ATCC 700345 / ANG-SQ1) protein is 5'-nucleotidase SurE.